We begin with the raw amino-acid sequence, 499 residues long: Aspartyl/glutamyl-tRNA(Asn/Gln) amidotransferase subunit B (499 aa).

Belongs to the GatB/GatE family. GatB subfamily. In terms of assembly, heterotrimer of A, B and C subunits.

It catalyses the reaction L-glutamyl-tRNA(Gln) + L-glutamine + ATP + H2O = L-glutaminyl-tRNA(Gln) + L-glutamate + ADP + phosphate + H(+). The enzyme catalyses L-aspartyl-tRNA(Asn) + L-glutamine + ATP + H2O = L-asparaginyl-tRNA(Asn) + L-glutamate + ADP + phosphate + 2 H(+). Its function is as follows. Allows the formation of correctly charged Asn-tRNA(Asn) or Gln-tRNA(Gln) through the transamidation of misacylated Asp-tRNA(Asn) or Glu-tRNA(Gln) in organisms which lack either or both of asparaginyl-tRNA or glutaminyl-tRNA synthetases. The reaction takes place in the presence of glutamine and ATP through an activated phospho-Asp-tRNA(Asn) or phospho-Glu-tRNA(Gln). This Bifidobacterium animalis subsp. lactis (strain AD011) protein is Aspartyl/glutamyl-tRNA(Asn/Gln) amidotransferase subunit B.